The chain runs to 111 residues: Gene 81 protein (111 aa).

This is Gene 81 protein (81) from Mycobacterium (Mycobacteriophage L5).